A 185-amino-acid polypeptide reads, in one-letter code: Elongation factor P (185 aa).

This sequence belongs to the elongation factor P family.

The protein localises to the cytoplasm. It participates in protein biosynthesis; polypeptide chain elongation. Functionally, involved in peptide bond synthesis. Stimulates efficient translation and peptide-bond synthesis on native or reconstituted 70S ribosomes in vitro. Probably functions indirectly by altering the affinity of the ribosome for aminoacyl-tRNA, thus increasing their reactivity as acceptors for peptidyl transferase. The polypeptide is Elongation factor P (Dechloromonas aromatica (strain RCB)).